The following is a 121-amino-acid chain: NAD(P)H-quinone oxidoreductase subunit M (121 aa).

The protein belongs to the complex I NdhM subunit family. NDH-1 can be composed of about 15 different subunits; different subcomplexes with different compositions have been identified which probably have different functions.

It localises to the cellular thylakoid membrane. It catalyses the reaction a plastoquinone + NADH + (n+1) H(+)(in) = a plastoquinol + NAD(+) + n H(+)(out). The catalysed reaction is a plastoquinone + NADPH + (n+1) H(+)(in) = a plastoquinol + NADP(+) + n H(+)(out). Functionally, NDH-1 shuttles electrons from an unknown electron donor, via FMN and iron-sulfur (Fe-S) centers, to quinones in the respiratory and/or the photosynthetic chain. The immediate electron acceptor for the enzyme in this species is believed to be plastoquinone. Couples the redox reaction to proton translocation, and thus conserves the redox energy in a proton gradient. Cyanobacterial NDH-1 also plays a role in inorganic carbon-concentration. The polypeptide is NAD(P)H-quinone oxidoreductase subunit M (Synechococcus sp. (strain JA-3-3Ab) (Cyanobacteria bacterium Yellowstone A-Prime)).